Consider the following 112-residue polypeptide: Putative iron-sulfur cluster insertion protein ErpA (112 aa).

Residues cysteine 40, cysteine 104, and cysteine 106 each coordinate iron-sulfur cluster.

The protein belongs to the HesB/IscA family. Homodimer. Iron-sulfur cluster serves as cofactor.

Its function is as follows. Required for insertion of 4Fe-4S clusters. In Neisseria gonorrhoeae (strain ATCC 700825 / FA 1090), this protein is Putative iron-sulfur cluster insertion protein ErpA.